Here is a 635-residue protein sequence, read N- to C-terminus: Protein OPG056 (635 aa).

Belongs to the orthopoxvirus OPG056 family. Interacts with protein OPG164. Interacts with protein OPG064.

It is found in the virion membrane. Its subcellular location is the host endosome. Plays a role in intracellular enveloped virus (IEV) transport to the cell surface through microtubule transport. Together with protein OPG064, forms a complex that interacts with host KLC2 (kinesin light chain isoform 2) to engage the kinesin-1 complex and thereby promote IEV trafficking. This is Protein OPG056 (OPG056) from Variola virus (isolate Human/India/Ind3/1967) (VARV).